The following is a 218-amino-acid chain: Pyridoxal phosphate homeostasis protein (218 aa).

Position 25 is an N6-(pyridoxal phosphate)lysine (lysine 25).

This sequence belongs to the pyridoxal phosphate-binding protein YggS/PROSC family.

Its function is as follows. Pyridoxal 5'-phosphate (PLP)-binding protein, which is involved in PLP homeostasis. This is Pyridoxal phosphate homeostasis protein from Synechocystis sp. (strain ATCC 27184 / PCC 6803 / Kazusa).